Reading from the N-terminus, the 129-residue chain is Glycine cleavage system H protein (129 aa).

Residues leucine 24–lysine 106 form the Lipoyl-binding domain. Lysine 65 is subject to N6-lipoyllysine.

The protein belongs to the GcvH family. In terms of assembly, the glycine cleavage system is composed of four proteins: P, T, L and H. (R)-lipoate serves as cofactor.

In terms of biological role, the glycine cleavage system catalyzes the degradation of glycine. The H protein shuttles the methylamine group of glycine from the P protein to the T protein. The sequence is that of Glycine cleavage system H protein from Prochlorococcus marinus (strain MIT 9515).